A 173-amino-acid polypeptide reads, in one-letter code: ATP synthase subunit b 1 (173 aa).

A helical membrane pass occupies residues 15–37; sequence TFWVTVAVLIFLAFFGRKIVGAI.

Belongs to the ATPase B chain family. In terms of assembly, F-type ATPases have 2 components, F(1) - the catalytic core - and F(0) - the membrane proton channel. F(1) has five subunits: alpha(3), beta(3), gamma(1), delta(1), epsilon(1). F(0) has three main subunits: a(1), b(2) and c(10-14). The alpha and beta chains form an alternating ring which encloses part of the gamma chain. F(1) is attached to F(0) by a central stalk formed by the gamma and epsilon chains, while a peripheral stalk is formed by the delta and b chains.

It localises to the cell inner membrane. In terms of biological role, f(1)F(0) ATP synthase produces ATP from ADP in the presence of a proton or sodium gradient. F-type ATPases consist of two structural domains, F(1) containing the extramembraneous catalytic core and F(0) containing the membrane proton channel, linked together by a central stalk and a peripheral stalk. During catalysis, ATP synthesis in the catalytic domain of F(1) is coupled via a rotary mechanism of the central stalk subunits to proton translocation. Component of the F(0) channel, it forms part of the peripheral stalk, linking F(1) to F(0). The polypeptide is ATP synthase subunit b 1 (Acidiphilium cryptum (strain JF-5)).